Reading from the N-terminus, the 352-residue chain is C-C chemokine receptor type 5 (352 aa).

Residues 1 to 30 (MDYQVSSPTYDIDYYTSEPCQKVNVKQIAA) are Extracellular-facing. At Tyr3 the chain carries Sulfotyrosine. O-linked (GalNAc...) serine glycans are attached at residues Ser6 and Ser7. 3 positions are modified to sulfotyrosine: Tyr10, Tyr14, and Tyr15. 2 disulfide bridges follow: Cys20-Cys269 and Cys101-Cys178. Residues 31 to 58 (RLLPPLYSLVFIFGFVGNILVVLILINC) form a helical membrane-spanning segment. The Cytoplasmic segment spans residues 59-68 (KRLKSMTDIY). Residues 69-89 (LLNLAISDLFFLLTVPFWAHY) form a helical membrane-spanning segment. The Extracellular portion of the chain corresponds to 90–102 (AAAQWDFGNTMCQ). Residues 103-124 (LLTGLYFIGFFSGIFFIILLTI) form a helical membrane-spanning segment. Over 125–141 (DRYLAIVHAVFALKART) the chain is Cytoplasmic. The helical transmembrane segment at 142 to 166 (VTFGVVTSVITWVVAVFASLPGIIF) threads the bilayer. At 167-198 (TRSQREGLHYTCSSHFPYSQYQFWKNFQTLKI) the chain is on the extracellular side. A helical membrane pass occupies residues 199 to 218 (VILGLVLPLLVMVICYSGIL). Over 219–235 (KTLLRCRNEKKRHRAVR) the chain is Cytoplasmic. Residues 236-260 (LIFTIMIVYFLFWAPYNIVLLLNTF) form a helical membrane-spanning segment. Over 261–277 (QEFFGLNNCSSSNRLDQ) the chain is Extracellular. A helical transmembrane segment spans residues 278–301 (AMQVTETLGMTHCCINPIIYAFVG). Residues 302-352 (EKFRNYLLVFFQKHIAKRFCKCCSIFQQEAPERASSVYTRSTGEQEISVGL) are Cytoplasmic-facing. S-palmitoyl cysteine attachment occurs at residues Cys321, Cys323, and Cys324. Residues Ser336, Ser337, Ser342, and Ser349 each carry the phosphoserine; by BARK1 modification.

Belongs to the G-protein coupled receptor 1 family. As to quaternary structure, interacts with PRAF2. Efficient ligand binding to CCL3/MIP-1alpha and CCL4/MIP-1beta requires sulfation, O-glycosylation and sialic acid modifications. Glycosylation on Ser-6 is required for efficient binding of CCL4. Interacts with GRK2. Interacts with ARRB1 and ARRB2. Interacts with CNIH4. Interacts with S100A4; this interaction stimulates T-lymphocyte chemotaxis. Post-translationally, sulfated on at least 2 of the N-terminal tyrosines. Sulfation is required for efficient binding of the chemokines, CCL3 and CCL4. In terms of processing, palmitoylation in the C-terminal is important for cell surface expression. Phosphorylation on serine residues in the C-terminal is stimulated by binding CC chemokines especially by APO-RANTES. Post-translationally, O-glycosylated, but not N-glycosylated. Ser-6 appears to be the major site even if Ser-7 may be also O-glycosylated. Also sialylated glycans present which contribute to chemokine binding. Thr-16 and Ser-17 may also be glycosylated and, if so, with small moieties such as a T-antigen.

It localises to the cell membrane. Functionally, receptor for a number of inflammatory CC-chemokines including CCL3/MIP-1-alpha, CCL4/MIP-1-beta and RANTES and subsequently transduces a signal by increasing the intracellular calcium ion level. May play a role in the control of granulocytic lineage proliferation or differentiation. Participates in T-lymphocyte migration to the infection site by acting as a chemotactic receptor. The sequence is that of C-C chemokine receptor type 5 (CCR5) from Semnopithecus entellus (Northern plains gray langur).